The following is a 441-amino-acid chain: C4-dicarboxylate transport protein (441 aa).

The next 8 helical transmembrane spans lie at 9 to 29, 45 to 65, 79 to 99, 145 to 165, 187 to 207, 220 to 240, 308 to 328, and 356 to 376; these read SLYF…HFMP, LVKM…IAGM, LLYF…VVNV, AFAE…GFAL, FAAI…AMAF, LAAL…LVLG, IYLT…LTLT, and AATL…ILGI.

This sequence belongs to the dicarboxylate/amino acid:cation symporter (DAACS) (TC 2.A.23) family.

The protein resides in the cell inner membrane. Functionally, responsible for the transport of dicarboxylates such as succinate, fumarate, and malate from the periplasm across the membrane. In Laribacter hongkongensis (strain HLHK9), this protein is C4-dicarboxylate transport protein.